The primary structure comprises 246 residues: 5'-nucleotidase SurE (246 aa).

Residues Asp-8, Asp-9, Ser-39, and Asn-91 each contribute to the a divalent metal cation site.

Belongs to the SurE nucleotidase family. A divalent metal cation is required as a cofactor.

The protein localises to the cytoplasm. It catalyses the reaction a ribonucleoside 5'-phosphate + H2O = a ribonucleoside + phosphate. Nucleotidase that shows phosphatase activity on nucleoside 5'-monophosphates. This chain is 5'-nucleotidase SurE, found in Histophilus somni (strain 129Pt) (Haemophilus somnus).